A 63-amino-acid polypeptide reads, in one-letter code: MMTQCKPLSFFLRNGRIIKKTDYGNYIRYEIIIRNQKLAILDCKDNQCIEIASFDLTKINKKK.

This is an uncharacterized protein from Acidianus bottle-shaped virus (isolate Italy/Pozzuoli) (ABV).